The primary structure comprises 277 residues: Putative glucose-6-phosphate/phosphate-translocator-like protein 1 (277 aa).

5 consecutive transmembrane segments (helical) span residues 8 to 28, 46 to 66, 124 to 143, 153 to 173, and 230 to 250; these read VLPS…WWAL, LWLT…VSWV, MIGF…RNIF, VSVM…VTPF, and PLKH…FIYS.

This sequence belongs to the TPT transporter family. GPT (TC 2.A.7.9) subfamily.

The protein localises to the membrane. In Arabidopsis thaliana (Mouse-ear cress), this protein is Putative glucose-6-phosphate/phosphate-translocator-like protein 1.